The sequence spans 184 residues: MKAFLKILMVLIFVSVAYAKSPPTLSKEEEVLQHLQSFSAHFKQVLKNEKPLVYYGVLKAKAPNWALWVYEKPLKKEIYMNDKEVVIYEPNLFQATITPLKDKTDFFTILKRLKKQDDGSFKTTINKTTYRLVFKDGKPFSLEFKDGMNNLVTITFSQAEINPTIADEIFVFKPKDENIDIVRQ.

An N-terminal signal peptide occupies residues 1-19; sequence MKAFLKILMVLIFVSVAYA.

It belongs to the LolA family. In terms of assembly, monomer.

It localises to the periplasm. In terms of biological role, participates in the translocation of lipoproteins from the inner membrane to the outer membrane. Only forms a complex with a lipoprotein if the residue after the N-terminal Cys is not an aspartate (The Asp acts as a targeting signal to indicate that the lipoprotein should stay in the inner membrane). This Helicobacter pylori (strain P12) protein is Outer-membrane lipoprotein carrier protein.